We begin with the raw amino-acid sequence, 616 residues long: Chaperone protein HscA homolog (616 aa).

The protein belongs to the heat shock protein 70 family.

Chaperone involved in the maturation of iron-sulfur cluster-containing proteins. Has a low intrinsic ATPase activity which is markedly stimulated by HscB. This chain is Chaperone protein HscA homolog, found in Histophilus somni (strain 2336) (Haemophilus somnus).